The primary structure comprises 69 residues: Guanine nucleotide-binding protein G(I)/G(S)/G(O) subunit gamma-T2 (69 aa).

Cys66 is modified (cysteine methyl ester). Cys66 carries the S-farnesyl cysteine lipid modification. Residues 67 to 69 (IIS) constitute a propeptide, removed in mature form.

This sequence belongs to the G protein gamma family. In terms of assembly, g proteins are composed of 3 units, alpha, beta and gamma.

It is found in the cell membrane. Functionally, guanine nucleotide-binding proteins (G proteins) are involved as a modulator or transducer in various transmembrane signaling systems. The beta and gamma chains are required for the GTPase activity, for replacement of GDP by GTP, and for G protein-effector interaction. This is Guanine nucleotide-binding protein G(I)/G(S)/G(O) subunit gamma-T2 (GNGT2) from Bos taurus (Bovine).